A 2238-amino-acid chain; its full sequence is RNA-directed RNA polymerase L (2238 aa).

Residues 26–284 (ITLVTCQNDA…THHSEHPVDC (259 aa)) are endonuclease. 3 residues coordinate Mn(2+): Glu-51, Asp-89, and Glu-102. The active site involves Lys-115. The 200-residue stretch at 1188 to 1387 (TDMKMCVNLG…FISTKFNKFV (200 aa)) folds into the RdRp catalytic domain. Asp-1346 serves as a coordination point for Mg(2+).

Belongs to the Bunyavirales RNA polymerase family. Homomultimer; the oligomeric structure is essential for the polymerase activity. Interacts with nucleoprotein N. Interacts with protein Z; this interaction inhibits viral transcription and replication, Z partially blocks the product exit tunnel for the releasing nascent RNA product. Requires Mn(2+) as cofactor. It depends on Mg(2+) as a cofactor.

It localises to the virion. The protein localises to the host cytoplasm. The catalysed reaction is RNA(n) + a ribonucleoside 5'-triphosphate = RNA(n+1) + diphosphate. RNA-dependent RNA polymerase, which is responsible for the replication and transcription of the viral RNA genome using antigenomic RNA as an intermediate. During transcription, synthesizes subgenomic RNAs and assures their capping by a cap-snatching mechanism, which involves the endonuclease activity cleaving the host capped pre-mRNAs. These short capped RNAs are then used as primers for viral transcription. The 3'-end of subgenomic mRNAs molecules are heterogeneous and not polyadenylated. The replicase function is to direct synthesis of antigenomic and genomic RNA which are encapsidated and non capped. As a consequence of the use of the same enzyme for both transcription and replication, these mechanisms need to be well coordinated. These processes may be regulated by proteins N and Z in a dose-dependent manner. Z protein inhibits the viral polymerase L und thus the viral transcription and RNA synthesis. The sequence is that of RNA-directed RNA polymerase L from Calomys callosus (Large vesper mouse).